The chain runs to 250 residues: uncharacterized protein (250 aa).

K17 is covalently cross-linked (Glycyl lysine isopeptide (Lys-Gly) (interchain with G-Cter in ubiquitin)). Residues R30–R67 form a disordered region.

This is an uncharacterized protein from Saccharomyces cerevisiae (strain ATCC 204508 / S288c) (Baker's yeast).